We begin with the raw amino-acid sequence, 593 residues long: MSMSKLLSPPPTSPPGPALSRLPCRRVAPPPVLPFPFPLRRLTSRRVFATSCSSSDSEHAPSASSTALAGAGDDLSAGVTQEREGALPFVQLSSGIVLRTEEQSLLGDHAPAPAPASAASSFALLDELNGGCREDDHLGETPAYPAAMNALYAACLAGNATEQLWNFTWPAAVAVLHPASILPVAVLGFFTKLVVFAAGPLVGELISSLPRIPAYRSLAAIQTAAHLVSVATITYAFAVHRAAAASLLLRPWFAVLVASTAVDRLACVALGIIAERDFVVQLAGAGRPVALAKANATLSRVDLLCETVGASIFALLLSKNNPLTCIKLSCVISLCALPLLIFLCGEMNRLADGIFDHSENTTSHAEKTSSFSIRKTVEEAVATVRNGWSEYMRQPVLPASLAYVFVCFNVALAPGALMTTFLIHQGVRPSVIGAFGGSSGAVGILATFATARLVKELGILKAGAAGLIAQSALLGAAVVVYLTGAVSRRAGALFAFLGLIVASRAGHMAYSAIGLQVVQTGNPASKAKLIGATEIAVASLAELAMMAVAVVASDASHFGALAALSATAVTAAAGMYCRWLANPSDELRRIFPS.

The disordered stretch occupies residues 1–23 (MSMSKLLSPPPTSPPGPALSRLP). The N-terminal 51 residues, 1 to 51 (MSMSKLLSPPPTSPPGPALSRLPCRRVAPPPVLPFPFPLRRLTSRRVFATS), are a transit peptide targeting the chloroplast. Pro residues predominate over residues 8 to 17 (SPPPTSPPGP). The next 11 helical transmembrane spans lie at 181 to 201 (ILPVAVLGFFTKLVVFAAGPL), 219 to 239 (AAIQTAAHLVSVATITYAFAV), 253 to 273 (FAVLVASTAVDRLACVALGII), 303 to 322 (LLCETVGASIFALLLSKNNP), 323 to 343 (LTCIKLSCVISLCALPLLIFL), 403 to 423 (YVFVCFNVALAPGALMTTFLI), 431 to 451 (VIGAFGGSSGAVGILATFATA), 462 to 482 (AGAAGLIAQSALLGAAVVVYL), 493 to 513 (LFAFLGLIVASRAGHMAYSAI), 530 to 550 (IGATEIAVASLAELAMMAVAV), and 557 to 577 (HFGALAALSATAVTAAAGMYC).

The protein belongs to the ferroportin (FP) (TC 2.A.100) family. SLC40A subfamily.

It localises to the membrane. Its subcellular location is the plastid. It is found in the chloroplast envelope. In terms of biological role, may be involved in iron transport and iron homeostasis. This chain is Solute carrier family 40 member 3, chloroplastic, found in Oryza sativa subsp. japonica (Rice).